A 459-amino-acid polypeptide reads, in one-letter code: Elongation factor 1-alpha (459 aa).

Gly-2 carries the n,N,N-trimethylglycine modification. N6,N6-dimethyllysine; alternate is present on Lys-3. Lys-3 carries the N6-methyllysine; alternate modification. A tr-type G domain is found at 5-240 (KTHVNVVVIG…DAVDPPTRPS (236 aa)). The G1 stretch occupies residues 14-21 (GHVDSGKS). A GTP-binding site is contributed by 14-21 (GHVDSGKS). Position 30 is an N6-methyllysine (Lys-30). The tract at residues 70–74 (VITID) is G2. Lys-79 carries the post-translational modification N6,N6,N6-trimethyllysine. The interval 91–94 (DAPG) is G3. Residues 91–95 (DAPGH) and 153–156 (NKMD) contribute to the GTP site. The segment at 153–156 (NKMD) is G4. The segment at 192 to 194 (SGW) is G5. Lys-316 carries the post-translational modification N6,N6-dimethyllysine; alternate. At Lys-316 the chain carries N6-methyllysine; alternate. Lys-390 bears the N6-methyllysine mark.

It belongs to the TRAFAC class translation factor GTPase superfamily. Classic translation factor GTPase family. EF-Tu/EF-1A subfamily.

It localises to the cytoplasm. In terms of biological role, this protein promotes the GTP-dependent binding of aminoacyl-tRNA to the A-site of ribosomes during protein biosynthesis. The sequence is that of Elongation factor 1-alpha (TEF) from Blastobotrys adeninivorans (Yeast).